A 245-amino-acid polypeptide reads, in one-letter code: Probable transcriptional regulatory protein MAG6590 (245 aa).

It belongs to the TACO1 family.

It localises to the cytoplasm. The sequence is that of Probable transcriptional regulatory protein MAG6590 from Mycoplasmopsis agalactiae (strain NCTC 10123 / CIP 59.7 / PG2) (Mycoplasma agalactiae).